Consider the following 161-residue polypeptide: Anthranilate 1,2-dioxygenase small subunit (161 aa).

This sequence belongs to the bacterial ring-hydroxylating dioxygenase beta subunit family. Part of a multicomponent enzyme system composed of a reductase (AndAa), a ferredoxin (AndAb) and a two-subunit oxygenase component (AndAc and AndAd).

It catalyses the reaction anthranilate + NADH + O2 + 3 H(+) = catechol + NH4(+) + CO2 + NAD(+). The enzyme catalyses anthranilate + NADPH + O2 + 3 H(+) = catechol + NH4(+) + CO2 + NADP(+). The protein operates within aromatic compound metabolism; anthranilate degradation via hydroxylation; catechol from anthranilate: step 1/1. Its function is as follows. Oxygenase component of anthranilate dioxygenase multicomponent enzyme system which catalyzes the incorporation of both atoms of molecular oxygen into anthranilate to form catechol. Can also act on benzoate and salicylate but not on 2-chlorobenzoate or o-toluate. In Burkholderia cepacia (Pseudomonas cepacia), this protein is Anthranilate 1,2-dioxygenase small subunit.